The primary structure comprises 655 residues: Integrin beta-5 (655 aa).

A VWFA domain is found at 1-234 (DLSLSMKDDL…QLIINAYNSI (234 aa)). At 1-575 (DLSLSMKDDL…REPECGNTPN (575 aa)) the chain is on the extracellular side. Serine 3 and serine 5 together coordinate Mg(2+). Ca(2+) is bound by residues serine 5, aspartate 8, aspartate 9, and aspartate 40. Cysteine 58 and cysteine 67 are disulfide-bonded. Ca(2+) contacts are provided by asparagine 98, aspartate 100, proline 102, and glutamate 103. Glutamate 103 is a Mg(2+) binding site. Residues cysteine 115 and cysteine 156 are joined by a disulfide bond. The N-linked (GlcNAc...) asparagine glycan is linked to asparagine 203. Glycine 218 serves as a coordination point for Ca(2+). 13 disulfides stabilise this stretch: cysteine 257-cysteine 269, cysteine 289-cysteine 317, cysteine 321-cysteine 340, cysteine 332-cysteine 343, cysteine 345-cysteine 354, cysteine 356-cysteine 386, cysteine 369-cysteine 384, cysteine 378-cysteine 389, cysteine 391-cysteine 404, cysteine 406-cysteine 427, cysteine 411-cysteine 425, cysteine 419-cysteine 430, and cysteine 432-cysteine 441. N-linked (GlcNAc...) asparagine glycosylation is present at asparagine 316. I-EGF domains lie at 321–355 (CSVG…TRCE), 356–405 (CQDG…PFCE), 406–442 (CDNF…DNCN), and 443–482 (CSTD…EMCE). N-linked (GlcNAc...) asparagine glycosylation is present at asparagine 408. Asparagine 442 carries an N-linked (GlcNAc...) asparagine glycan. Intrachain disulfides connect cysteine 443-cysteine 466, cysteine 450-cysteine 464, cysteine 458-cysteine 469, cysteine 471-cysteine 481, cysteine 484-cysteine 487, cysteine 491-cysteine 538, cysteine 497-cysteine 517, cysteine 500-cysteine 513, and cysteine 546-cysteine 570. N-linked (GlcNAc...) asparagine glycosylation is found at asparagine 510 and asparagine 561. A helical transmembrane segment spans residues 576-598 (AMTILLAVVGSILLVGLALLAIW). Residues 599–655 (KLLVTIHDRREFAKFQSERSRARYEMASNPLYRKPISTHTVDFTFNKFNKSYNGTVD) lie on the Cytoplasmic side of the membrane. Serine 626 is subject to Phosphoserine.

It belongs to the integrin beta chain family. In terms of assembly, heterodimer of an alpha and a beta subunit. Beta-5 (ITGB5) associates with alpha-V (ITGAV). Interacts with MYO10. Interacts with DAB2. Integrin ITGAV:ITGB5 interacts with FBLN5 (via N-terminus). ITGAV:ITGB5 interacts with CCN3. Interacts with tensin TNS3; TNS3 also interacts with PEAK1, thus acting as an adapter molecule to bridge the association of PEAK1 with ITGB5.

The protein resides in the cell membrane. Integrin alpha-V/beta-5 (ITGAV:ITGB5) is a receptor for fibronectin. It recognizes the sequence R-G-D in its ligand. This is Integrin beta-5 (ITGB5) from Papio cynocephalus (Yellow baboon).